The primary structure comprises 196 residues: Pyridoxal 5'-phosphate synthase subunit PdxT (196 aa).

47–49 (GES) contacts L-glutamine. The active-site Nucleophile is C79. L-glutamine is bound by residues R106 and 134–135 (IR). Residues H170 and E172 each act as charge relay system in the active site.

This sequence belongs to the glutaminase PdxT/SNO family. As to quaternary structure, in the presence of PdxS, forms a dodecamer of heterodimers. Only shows activity in the heterodimer.

It catalyses the reaction aldehydo-D-ribose 5-phosphate + D-glyceraldehyde 3-phosphate + L-glutamine = pyridoxal 5'-phosphate + L-glutamate + phosphate + 3 H2O + H(+). The catalysed reaction is L-glutamine + H2O = L-glutamate + NH4(+). The protein operates within cofactor biosynthesis; pyridoxal 5'-phosphate biosynthesis. In terms of biological role, catalyzes the hydrolysis of glutamine to glutamate and ammonia as part of the biosynthesis of pyridoxal 5'-phosphate. The resulting ammonia molecule is channeled to the active site of PdxS. This Bacillus thuringiensis subsp. konkukian (strain 97-27) protein is Pyridoxal 5'-phosphate synthase subunit PdxT.